The primary structure comprises 168 residues: GTP-dependent dephospho-CoA kinase (168 aa).

Residues D49, V50, V51, D68, K70, and E120 each contribute to the GTP site.

This sequence belongs to the GTP-dependent DPCK family.

The catalysed reaction is 3'-dephospho-CoA + GTP = GDP + CoA + H(+). Its pathway is cofactor biosynthesis; coenzyme A biosynthesis. Catalyzes the GTP-dependent phosphorylation of the 3'-hydroxyl group of dephosphocoenzyme A to form coenzyme A (CoA). This Pyrobaculum calidifontis (strain DSM 21063 / JCM 11548 / VA1) protein is GTP-dependent dephospho-CoA kinase.